Here is a 426-residue protein sequence, read N- to C-terminus: 5-hydroxybenzimidazole synthase BzaB (426 aa).

Residues methionine 95, tyrosine 124, histidine 163, 185 to 187, 226 to 229, and glutamate 265 contribute to the substrate site; these read SRG and DAIR. Histidine 269 serves as a coordination point for Zn(2+). A substrate-binding site is contributed by phenylalanine 292. A Zn(2+)-binding site is contributed by histidine 333. Positions 407, 410, and 414 each coordinate [4Fe-4S] cluster.

The protein belongs to the ThiC family. 5-hydroxybenzimidazole synthase subfamily. [4Fe-4S] cluster serves as cofactor.

The enzyme catalyses 5-amino-1-(5-phospho-beta-D-ribosyl)imidazole + AH2 + S-adenosyl-L-methionine = 5-hydroxybenzimidazole + 5'-deoxyadenosine + formate + L-methionine + A + NH4(+) + phosphate + 2 H(+). In terms of biological role, together with BzaA, probably catalyzes the conversion of aminoimidazole ribotide (AIR) to 5-hydroxybenzimidazole (5-HBI) in a radical S-adenosyl-L-methionine (SAM)-dependent reaction. Is thus involved in the anaerobic biosynthesis of the benzimidazole lower axial ligand of the cobamide produced by M.thermoacetica. Requires BzaA for catalytic activity, as BzaB alone displays no activity. This is 5-hydroxybenzimidazole synthase BzaB from Moorella thermoacetica (strain ATCC 39073 / JCM 9320).